The chain runs to 303 residues: MPSSAQVLLCLAAVLAAAAATTAEAHSQCLDNPPDRSIHGRQLAEAGEVVHDLPGGLRAYVSGAASSSRAVVLASDVFGYEAPLLRQIVDKVAKAGYFVVVPDFLKGDYLDDKKNFTEWLEAHSPVKAAEDAKPLFAALKKEGKSVAVGGYCWGGKLSVEVGKTSDVKAVCLSHPYSVTADDMKEVKWPIEILGAQNDTTTPPKEVYRFVHVLRERHEVPFRRQDRRDGPRLHGQLVQQAPQLNEACTAPTRLNSINHSSAVIFCFDSWLPRLIFMATTSSTTVISLIFFVSMYFFSFLFAFL.

A signal peptide spans 1-43 (MPSSAQVLLCLAAVLAAAAATTAEAHSQCLDNPPDRSIHGRQL). N-linked (GlcNAc...) asparagine glycosylation is found at Asn-115, Asn-197, and Asn-257.

Post-translationally, glycosylated.

It localises to the secreted. Plays a role in control of plant growth. Mediates specific degradation of cell wall (1,3)(1,4)-beta-D-glucans and is related to auxin-mediated growth and development of cereal coleoptiles. This Zea mays (Maize) protein is Endo-1,3;1,4-beta-D-glucanase.